Reading from the N-terminus, the 379-residue chain is Chaperone protein DnaJ (379 aa).

The J domain occupies 5–70 (DFYEVLGVSR…QKRSAYDQYG (66 aa)). A CR-type zinc finger spans residues 134–212 (GCDKEIEVPT…CHGEGRVHKT (79 aa)). Cys-147, Cys-150, Cys-164, Cys-167, Cys-186, Cys-189, Cys-200, and Cys-203 together coordinate Zn(2+). CXXCXGXG motif repeat units lie at residues 147–154 (CDPCEGTG), 164–171 (CSTCHGQG), 186–193 (CPTCHGKG), and 200–207 (CNSCHGEG).

The protein belongs to the DnaJ family. Homodimer. Requires Zn(2+) as cofactor.

It is found in the cytoplasm. In terms of biological role, participates actively in the response to hyperosmotic and heat shock by preventing the aggregation of stress-denatured proteins and by disaggregating proteins, also in an autonomous, DnaK-independent fashion. Unfolded proteins bind initially to DnaJ; upon interaction with the DnaJ-bound protein, DnaK hydrolyzes its bound ATP, resulting in the formation of a stable complex. GrpE releases ADP from DnaK; ATP binding to DnaK triggers the release of the substrate protein, thus completing the reaction cycle. Several rounds of ATP-dependent interactions between DnaJ, DnaK and GrpE are required for fully efficient folding. Also involved, together with DnaK and GrpE, in the DNA replication of plasmids through activation of initiation proteins. In Aliivibrio fischeri (strain ATCC 700601 / ES114) (Vibrio fischeri), this protein is Chaperone protein DnaJ.